The sequence spans 1974 residues: MNEDTNKERGTIGTVQWRWGERLGEILREIKNSHYFFFFDSFFDSWTQFNSVRSFIPIFFHQERFLKLADPRIWSILLSRTQGSTQGSTSITIKGVILFKGVILFVVAALIYRINNRNMVESKTLYLRGLLPIPMNSIGPRNDTLEESVGSSNINRLIVSLLYLPKGKRISESSFLNPKESTFLNPKESTWVLPITKKSSMPWGSRWWRNWIGKKRDSSQLKGSSYQSRDHLDSISNEDSEYHNQREIPLPEERKIEEFLENPTRSVRSFFSDRWSELHLGSNPTERSTRDQKLLKKQQDLSFVPSRRSEKKEMVHIFKIITYLQNTVSIHPISSDPGCDRVPKDESDMDSSNKISFLNKNPFSEERFQEMANRFTLSITEPDLVYPKGSRFCNESIYRRIIKKWVPRGNVLENLKRTQIVVFVSNNIMEAVNQYRLIRNLIQIQYSTYGYIRNVLNRFFLMNRSDRNFEYGIQRDQIGKGTLNHRTLMKYMINQHLSNFFLKKSPFDSLIVIEKSKNRDPFAYRYKWSNGSKNFQEHLEHFLSEQKSRLEIAFDQFQRNYDKPLPLLLESIASIGLQIVHLKKWKPFLLDDHDTSRKMIDSFHTRNNRRKSFEKTDSYFSMIFDNQDNWLNPVKPFHRSSLISSFFKANRLRFWNNPHHFCFYSNTRFPFSVEKARISNYDFTYGQFLNILFIRNKIFSLCVGKKKHAFGGRDTISPIESQVSNIFIPNYFPSRTIYSIADISGTPLTEEEIVNLERTYCQPLSVSDRNLSDSEGKNLNQYLNFNSSMRLIPTEKDFPWKKPEKRKKRSQKRKKQSPCLPCLLCLCLKKGVEKGEMDRRDSAFSFLSDWKDLFQTYMPWFLTSTGYKHLNGIFLEPFSDLLPILTSSLSSCLSSSLSSSLSSSLSSSLSSLSSSLSSSLSSSLSSSLSSSLSSSLSSSLSSSLSSSLKFVSTFHDSMHEVGISWQILQIELQLRLFHLSHWKWAFQFQWDRLNKILNWINWISEISRKCMYSRLLLEATGMIHGKNESPLIPTHLRSVNVRELLYSILFLLLLAGYLVHTHLVFVSRAFSELQTEFKKLKPFLIPSSRMELEELLDAYPTSEPNPFEFELVKSIRSKKKYWNINLIDFIPHRITLSRKMSHLSHTSKELYSLIRKRENVNIKNANEDGKIDSWVVNSDLFVEEEFFHLLYDRTFMLTTKKSIDPILWSLTHSDHLSTHLSKNDSGYQMIEQPGAIYLRYLVDIHKKSLWNYEFNTSCLAEKRVFLAHYQTITYSQTSCGTNTFHFPSHGKPFSLRLLSPSRGVLVIGSIGTGRSYLVKHLATNSHLPFIRLAVSELLNNNPKFRWIEPEDSWPVFDDLLEHSAYYENRVGDGRDYIIDTIDASDDIDIDIVARGDIDFDKEEELLTRESDEEKKNPVRVQEKYRAEQFEEDLELAKIISPCIIWIPNIHDLNLRESTSLAAGLFVNKYSERCSTRDILVIASTHIPQKVDPSLISTNRLNRCIKVRRFFIPQKEKHVFTLLYTRGFHPHLEKNAFGSITLGSSAQDLRPLINDALLIGISQRKSIIDTNTIRCALHRETWEFQSHPKWVPNSQILFYQIGRAVVQKVLLSNCLSNYLIDPLSIYMKKRSFAGGTEGDSSLYKWYFELGTSLKLVTILLYLLSCSAGSVARDLCFLPGEDRIKLFENEMDSTLFHELLLILLEVLALESPLMGSSRTEKDCSQFDNDRVPFPFRPEPRKLLAIQRFLSEKEEWELAEGKEEGLLQPPQEIEGHIVSAPKIWRPWFCLLDGLDRPVEFLELGYPYCYGYRSFEGKQILFDKEDELEENDSEFLQSFIPRSSDEHGFFKLNQFIWDPPDPLFLLSTDEFPGSVFSYRELFADEELRITKTKLRTFRTRWLSKKAQKGRLELLINRQRWLRPNSDESEDSLYSQILSEIFEYLKNLFLSKRGLLDQTRKVLFRKRWVFPDEMHIFFM.

Residues 219-246 (SQLKGSSYQSRDHLDSISNEDSEYHNQR) are disordered. 1308–1315 (GSIGTGRS) contacts ATP.

The protein belongs to the Ycf2 family.

It is found in the plastid. It localises to the chloroplast stroma. Its function is as follows. Probable ATPase of unknown function. Its presence in a non-photosynthetic plant (Epifagus virginiana) and experiments in tobacco indicate that it has an essential function which is probably not related to photosynthesis. This is Protein Ycf2 from Jasminum nudiflorum (Winter jasmine).